Consider the following 130-residue polypeptide: Phosphoribosyl-AMP cyclohydrolase (130 aa).

Asp77 contacts Mg(2+). Residue Cys78 coordinates Zn(2+). Residues Asp79 and Asp81 each coordinate Mg(2+). Zn(2+) contacts are provided by Cys95 and Cys102.

The protein belongs to the PRA-CH family. In terms of assembly, homodimer. It depends on Mg(2+) as a cofactor. The cofactor is Zn(2+).

Its subcellular location is the cytoplasm. It carries out the reaction 1-(5-phospho-beta-D-ribosyl)-5'-AMP + H2O = 1-(5-phospho-beta-D-ribosyl)-5-[(5-phospho-beta-D-ribosylamino)methylideneamino]imidazole-4-carboxamide. Its pathway is amino-acid biosynthesis; L-histidine biosynthesis; L-histidine from 5-phospho-alpha-D-ribose 1-diphosphate: step 3/9. Its function is as follows. Catalyzes the hydrolysis of the adenine ring of phosphoribosyl-AMP. The sequence is that of Phosphoribosyl-AMP cyclohydrolase from Pseudomonas putida (strain ATCC 700007 / DSM 6899 / JCM 31910 / BCRC 17059 / LMG 24140 / F1).